A 335-amino-acid chain; its full sequence is Methionine import ATP-binding protein MetN 1 (335 aa).

Residues 2–242 (IEFHNVHKTY…PQHPTTRRFV (241 aa)) enclose the ABC transporter domain. ATP is bound at residue 38–45 (GHSGAGKS).

It belongs to the ABC transporter superfamily. Methionine importer (TC 3.A.1.24) family. As to quaternary structure, the complex is composed of two ATP-binding proteins (MetN), two transmembrane proteins (MetI) and a solute-binding protein (MetQ).

The protein localises to the cell inner membrane. The catalysed reaction is L-methionine(out) + ATP + H2O = L-methionine(in) + ADP + phosphate + H(+). The enzyme catalyses D-methionine(out) + ATP + H2O = D-methionine(in) + ADP + phosphate + H(+). Its function is as follows. Part of the ABC transporter complex MetNIQ involved in methionine import. Responsible for energy coupling to the transport system. In Pseudomonas savastanoi pv. phaseolicola (strain 1448A / Race 6) (Pseudomonas syringae pv. phaseolicola (strain 1448A / Race 6)), this protein is Methionine import ATP-binding protein MetN 1.